Here is a 475-residue protein sequence, read N- to C-terminus: Terminase, large subunit (475 aa).

The interval 1 to 58 (MELDAILDNLSDEEQIELLELLEEEENYRNTHLLYEFTPYSKQREFIDAGHDYQSDVL) is interaction with the terminase small subunit. Residues 1–282 (MELDAILDNL…EHEREARARG (282 aa)) are ATPase activity. The interval 308-475 (DHFYVIDAQD…MRLRQDDARY (168 aa)) is nuclease activity. Positions 317 and 455 each coordinate Mg(2+).

It belongs to the Lederbergvirus large terminase family. Interacts with the terminase small subunit; the active complex is composed of dimer of terminase large subunits and a nonamer ring of terminase small subunits. Interacts with the portal protein; this interaction allows the packaging of viral DNA. It depends on Mg(2+) as a cofactor.

Functionally, the terminase large subunit acts as an ATP driven molecular motor necessary for viral DNA translocation into empty capsids and as an endonuclease that cuts the viral genome to initiate and to end a packaging reaction. The terminase lies at a unique vertex of the procapsid and is composed of two subunits, a small terminase subunit involved in viral DNA recognition (packaging 'pac' sequence), and a large terminase subunit possessing endonucleolytic and ATPase activities. Both terminase subunits heterooligomerize and are docked on the portal protein to form the packaging machine. The terminase large subunit exhibits endonuclease activity and cleaves the viral genome concatemer once the capsid is full (headful packaging). Once the capsid is packaged with the DNA, the terminase complex is substituted by the tail. The protein is Terminase, large subunit (2) of Salmonella (Bacteriophage LP7).